A 551-amino-acid chain; its full sequence is Interleukin-2 receptor subunit beta (551 aa).

An N-terminal signal peptide occupies residues methionine 1–alanine 26. Topologically, residues threonine 27–threonine 240 are extracellular. N-linked (GlcNAc...) asparagine glycans are attached at residues asparagine 29, asparagine 43, and asparagine 71. The cysteines at positions 36 and 46 are disulfide-linked. Cysteines 74 and 86 form a disulfide. Residues alanine 134 to alanine 234 enclose the Fibronectin type-III domain. The N-linked (GlcNAc...) asparagine glycan is linked to asparagine 149. The WSXWS motif motif lies at tryptophan 220 to serine 224. A helical membrane pass occupies residues isoleucine 241–isoleucine 265. Over asparagine 266 to valine 551 the chain is Cytoplasmic. The short motif at leucine 278–serine 286 is the Box 1 motif element. 2 disordered regions span residues aspartate 393–serine 412 and serine 433–threonine 476.

The protein belongs to the type I cytokine receptor family. Type 4 subfamily. Non-covalent dimer of an alpha and a beta subunit. IL2R exists in 3 different forms: a high affinity dimer, an intermediate affinity monomer (beta subunit), and a low affinity monomer (alpha subunit). The high and intermediate affinity forms also associate with a gamma subunit. Interacts with SHB upon interleukin stimulation.

Its subcellular location is the cell membrane. It localises to the cell surface. Receptor for interleukin-2. This beta subunit is involved in receptor mediated endocytosis and transduces the mitogenic signals of IL2. Probably in association with IL15RA, involved in the stimulation of neutrophil phagocytosis by IL15. In Pan troglodytes (Chimpanzee), this protein is Interleukin-2 receptor subunit beta (IL2RB).